A 635-amino-acid polypeptide reads, in one-letter code: DNA mismatch repair protein MutL (635 aa).

The interval Gly359 to Tyr399 is disordered. A compositionally biased stretch (low complexity) spans Ala364 to Ala377. Over residues Val378 to Tyr399 the composition is skewed to basic and acidic residues.

The protein belongs to the DNA mismatch repair MutL/HexB family.

Functionally, this protein is involved in the repair of mismatches in DNA. It is required for dam-dependent methyl-directed DNA mismatch repair. May act as a 'molecular matchmaker', a protein that promotes the formation of a stable complex between two or more DNA-binding proteins in an ATP-dependent manner without itself being part of a final effector complex. The protein is DNA mismatch repair protein MutL of Yersinia pseudotuberculosis serotype O:1b (strain IP 31758).